Reading from the N-terminus, the 284-residue chain is Nicotinate-nucleotide pyrophosphorylase [carboxylating] (284 aa).

Substrate is bound by residues arginine 104, 137–139 (TRK), arginine 161, lysine 171, glutamate 200, aspartate 221, 247–249 (SGG), and 268–270 (VGA).

This sequence belongs to the NadC/ModD family. As to quaternary structure, hexamer formed by 3 homodimers.

It carries out the reaction nicotinate beta-D-ribonucleotide + CO2 + diphosphate = quinolinate + 5-phospho-alpha-D-ribose 1-diphosphate + 2 H(+). It participates in cofactor biosynthesis; NAD(+) biosynthesis; nicotinate D-ribonucleotide from quinolinate: step 1/1. In terms of biological role, involved in the catabolism of quinolinic acid (QA). This is Nicotinate-nucleotide pyrophosphorylase [carboxylating] (nadC) from Mycobacterium leprae (strain TN).